The primary structure comprises 160 residues: Eukaryotic translation initiation factor 5A (160 aa).

The segment covering 1-10 (MSDDDHHFES) has biased composition (basic and acidic residues). The disordered stretch occupies residues 1-23 (MSDDDHHFESSADAGASKTYPQQ). Residue lysine 52 is modified to Hypusine.

Belongs to the eIF-5A family. Lys-52 undergoes hypusination, a unique post-translational modification that consists in the addition of a butylamino group from spermidine to lysine side chain, leading to the formation of the unusual amino acid hypusine. eIF-5As are the only known proteins to undergo this modification, which is essential for their function.

In terms of biological role, translation factor that promotes translation elongation and termination, particularly upon ribosome stalling at specific amino acid sequence contexts. Binds between the exit (E) and peptidyl (P) site of the ribosome and promotes rescue of stalled ribosome: specifically required for efficient translation of polyproline-containing peptides as well as other motifs that stall the ribosome. Acts as a ribosome quality control (RQC) cofactor by joining the RQC complex to facilitate peptidyl transfer during CAT tailing step. This chain is Eukaryotic translation initiation factor 5A, found in Dianthus caryophyllus (Carnation).